Here is an 883-residue protein sequence, read N- to C-terminus: Alanine--tRNA ligase (883 aa).

Zn(2+) contacts are provided by His-563, His-567, Cys-677, and His-681.

This sequence belongs to the class-II aminoacyl-tRNA synthetase family. It depends on Zn(2+) as a cofactor.

The protein localises to the cytoplasm. It catalyses the reaction tRNA(Ala) + L-alanine + ATP = L-alanyl-tRNA(Ala) + AMP + diphosphate. In terms of biological role, catalyzes the attachment of alanine to tRNA(Ala) in a two-step reaction: alanine is first activated by ATP to form Ala-AMP and then transferred to the acceptor end of tRNA(Ala). Also edits incorrectly charged Ser-tRNA(Ala) and Gly-tRNA(Ala) via its editing domain. This Cereibacter sphaeroides (strain ATCC 17023 / DSM 158 / JCM 6121 / CCUG 31486 / LMG 2827 / NBRC 12203 / NCIMB 8253 / ATH 2.4.1.) (Rhodobacter sphaeroides) protein is Alanine--tRNA ligase.